A 381-amino-acid chain; its full sequence is MKIRSLLANCYLYFLSAIAFFLQWVKPESKVTLLISFEANAKAILEEYEQGQYSYKLNILYTQQASAIAESFPNVDAYLLQEKNPIHLIKAVYLMFNSKVIITDNYFLLTSVLNKRKQTKCIQVWHANGSLKKFGLEDITNMQRTKTDIKRFQKVYSSYDYLTVGSEEMANIFKKSFGIKDNQLLKIGVPLTDPYYRENKKKISDTLNIQRKKIILYAPTFRDYNMQSIQLPFTEEQLIHQLKEEYVLFVKLHPAIQNNIDIKYSSDYIKDVSNYALFDLLMAADILITDYSSVPFEFSILNKPILFYTYDLKLYQQKRGLVDNYLSIIPGRACYDSESLINEIQTPFNYSKIKVFSDRWNKYSDGNSSQNLLNFIENLIS.

The protein belongs to the CDP-glycerol glycerophosphotransferase family.

The protein localises to the cell membrane. The enzyme catalyses N-acetyl-beta-D-mannosaminyl-(1-&gt;4)-N-acetyl-alpha-D-glucosaminyl di-trans,octa-cis-undecaprenyl diphosphate + CDP-glycerol = 4-O-[(2R)-glycerylphospho]-N-acetyl-beta-D-mannosaminyl-(1-&gt;4)-N-acetyl-alpha-D-glucosaminyl di-trans,octa-cis-undecaprenyl diphosphate + CMP + H(+). It functions in the pathway cell wall biogenesis; poly(glycerol phosphate) teichoic acid biosynthesis. In terms of biological role, catalyzes the addition of a single glycerol phosphate residue to the prenoldiphosphate-linked disaccharide, as a primer for polymerisation by TagF. The protein is Teichoic acid glycerol-phosphate primase (tagB) of Bacillus subtilis (strain 168).